A 562-amino-acid polypeptide reads, in one-letter code: Alpha-1D adrenergic receptor (562 aa).

At 1–90 (MTFRDILSVT…VGGLVVSAQG (90 aa)) the chain is on the extracellular side. 2 disordered regions span residues 13 to 44 (GPRA…GVPG) and 50 to 69 (AVVG…EAGA). The span at 21–44 (GGSGAGGGAGTVGPEGPAVGGVPG) shows a compositional bias: gly residues. Asn-60 and Asn-76 each carry an N-linked (GlcNAc...) asparagine glycan. The helical transmembrane segment at 91-115 (VGVGVFLAAFILTAVAGNLLVILSV) threads the bilayer. Residues 116–127 (ACNRHLQTVTNY) are Cytoplasmic-facing. The helical transmembrane segment at 128 to 153 (FIVNLAVADLLLSAAVLPFSATMEVL) threads the bilayer. The Extracellular portion of the chain corresponds to 154 to 163 (GFWPFGRTFC). A helical transmembrane segment spans residues 164–186 (DVWAAVDVLCCTASILSLCTISV). Topologically, residues 187 to 207 (DRYVGVRHSLKYPAIMTERKA) are cytoplasmic. A helical membrane pass occupies residues 208-232 (AAILALLWAVALVVSVGPLLGWKEP). Residues 233-245 (VPPDERFCGITEE) lie on the Extracellular side of the membrane. Residues 246–269 (VGYAIFSSVCSFYLPMAVIVVMYC) traverse the membrane as a helical segment. Over 270–342 (RVYVVARSTT…KFSREKKAAK (73 aa)) the chain is Cytoplasmic. The chain crosses the membrane as a helical span at residues 343 to 367 (TLAIVVGVFVLCWFPFFFVLPLGSL). The Extracellular segment spans residues 368-374 (FPQLKPS). Residues 375–399 (EGVFKVIFWLGYFNSCVNPLIYPCS) traverse the membrane as a helical segment. The Cytoplasmic portion of the chain corresponds to 400-562 (SREFKRAFLR…DLSNLRETDI (163 aa)). The S-palmitoyl cysteine moiety is linked to residue Cys-413. The tract at residues 444-472 (QPAHRTPRGSPSPHCTPRPGLRRHAGGAG) is disordered.

Belongs to the G-protein coupled receptor 1 family. Adrenergic receptor subfamily. ADRA1D sub-subfamily. In terms of assembly, interacts with FLNA (via filamin repeat 21); increases PKA-mediated phosphorylation of FLNA. In terms of processing, palmitoylated. Palmitoylation by ZDHHC21 may increase the expression of the receptor and regulate downstream signaling.

The protein resides in the cell membrane. Its function is as follows. This alpha-adrenergic receptor mediates its effect through the influx of extracellular calcium. This chain is Alpha-1D adrenergic receptor (Adra1d), found in Mus musculus (Mouse).